The following is a 428-amino-acid chain: Immunoglobulin superfamily containing leucine-rich repeat protein (428 aa).

Positions 1-18 (MRALCLLCWAVLLNLVRA) are cleaved as a signal peptide. The LRRNT domain occupies 19 to 50 (CPEPCDCGEKYGFQIADCAYRDLEGVPPGFPA). N51 is a glycosylation site (N-linked (GlcNAc...) asparagine). 5 LRR repeats span residues 51–72 (NVTT…AFRE), 75–98 (LLQS…APLS), 99–122 (HLKS…HNLS), 123–144 (ALQL…AFSS), and 147–168 (ALRS…TFAP). The LRRCT domain maps to 180–231 (NPFDCTCGIVWFKTWALASAVSIPEQDNIACTTPHVLKGIPLGRLPPLPCSA). The Ig-like domain maps to 232 to 343 (PSVQLSYQPS…GSAESSVNVA (112 aa)). C257 and C327 are disulfide-bonded. N309 carries an N-linked (GlcNAc...) asparagine glycan.

In terms of tissue distribution, detected in thyroid, heart, retina and spinal cord.

Its subcellular location is the secreted. This is Immunoglobulin superfamily containing leucine-rich repeat protein (Islr) from Mus musculus (Mouse).